The sequence spans 206 residues: MELNVKTLEGTDAGTVSLSDAIFGLEPRQDIIARMVRWQLAKKQQGTHKTKTRAEVSRTGAKMYKQKGTGRARHHSARAPQFRGGGKAHGPVVRSHEHDLPKKVRALALRHALSAKFKADELIIVDQLVAADAKTKAAVGVFEALGLKNALVIGGVELDVNFKLAAANIPNIDVLPVQGINVYDILRRGKLVLSKAAVEALEERFK.

The segment at 63–96 (MYKQKGTGRARHHSARAPQFRGGGKAHGPVVRSH) is disordered. Positions 64 to 77 (YKQKGTGRARHHSA) are enriched in basic residues.

It belongs to the universal ribosomal protein uL4 family. As to quaternary structure, part of the 50S ribosomal subunit.

Its function is as follows. One of the primary rRNA binding proteins, this protein initially binds near the 5'-end of the 23S rRNA. It is important during the early stages of 50S assembly. It makes multiple contacts with different domains of the 23S rRNA in the assembled 50S subunit and ribosome. In terms of biological role, forms part of the polypeptide exit tunnel. The protein is Large ribosomal subunit protein uL4 of Allorhizobium ampelinum (strain ATCC BAA-846 / DSM 112012 / S4) (Agrobacterium vitis (strain S4)).